Here is an 886-residue protein sequence, read N- to C-terminus: Desmocollin-1 (886 aa).

Residues 1–29 (MAVACAAPGSTFSKQLLFFLLVLVLFCDA) form the signal peptide. A propeptide spanning residues 30-134 (CQKVSLHVPS…KEPVHNRSKR (105 aa)) is cleaved from the precursor. Asparagine 130 and asparagine 165 each carry an N-linked (GlcNAc...) asparagine glycan. Cadherin domains follow at residues 135–242 (RWAP…APYF), 243–354 (ETKL…SPYF), 355–471 (TQTS…GPEC), 472–575 (QPPV…DHPP), and 576–682 (QIDK…EERD). Over 135-691 (RWAPIPCSLM…DAKPNIILGK (557 aa)) the chain is Extracellular. The residue at position 385 (threonine 385) is a Phosphothreonine. Asparagine 546 carries an N-linked (GlcNAc...) (high mannose) asparagine glycan. The N-linked (GlcNAc...) asparagine glycan is linked to asparagine 613. Residues 692 to 714 (WAILAMVLGSALLLCILFTCFCV) traverse the membrane as a helical segment. At 715–886 (TTTKRTVKKC…RTLAKTCVKK (172 aa)) the chain is on the cytoplasmic side.

Binds to JUP/plakoglobin. As to expression, expressed in the epidermis and inner root sheaths of hair follicles (at protein level).

Its subcellular location is the cell membrane. It is found in the cell junction. It localises to the desmosome. In terms of biological role, a component of desmosome cell-cell junctions which are required for positive regulation of cellular adhesion. Required for desmosome adhesion strength between the granular layers of the epidermis, as a result moderates epidermal proliferation and differentiation. Is therefore required to maintain postnatal epidermal barrier function and normal hair follicle morphology into adulthood. This chain is Desmocollin-1 (Dsc1), found in Mus musculus (Mouse).